A 396-amino-acid chain; its full sequence is Major outer membrane porin, serovar A (396 aa).

The N-terminal stretch at 1 to 22 (MKKLLKSVLVFAALSSASSLQA) is a signal peptide.

Belongs to the chlamydial porin (CP) (TC 1.B.2) family. Part of a disulfide cross-linked outer membrane complex (COMC) composed of the major outer membrane porin (MOMP), the small cysteine-rich protein (OmcA) and the large cysteine-rich periplasmic protein (OmcB).

The protein localises to the cell outer membrane. Its function is as follows. In elementary bodies (EBs, the infectious stage, which is able to survive outside the host cell) provides the structural integrity of the outer envelope through disulfide cross-links with the small cysteine-rich protein and the large cysteine-rich periplasmic protein. It has been described in publications as the Sarkosyl-insoluble COMC (Chlamydia outer membrane complex), and serves as the functional equivalent of peptidoglycan. In terms of biological role, permits diffusion of specific solutes through the outer membrane. This is Major outer membrane porin, serovar A (ompA) from Chlamydia trachomatis.